The sequence spans 327 residues: Malate dehydrogenase (327 aa).

11-17 contacts NAD(+); sequence GAAGQIA. Positions 92 and 98 each coordinate substrate. NAD(+) is bound by residues Asn105, Gln112, and 129 to 131; that span reads VGN. Substrate is bound by residues Asn131 and Arg162. His187 acts as the Proton acceptor in catalysis.

The protein belongs to the LDH/MDH superfamily. MDH type 2 family.

The enzyme catalyses (S)-malate + NAD(+) = oxaloacetate + NADH + H(+). In terms of biological role, catalyzes the reversible oxidation of malate to oxaloacetate. The sequence is that of Malate dehydrogenase from Nitrosospira multiformis (strain ATCC 25196 / NCIMB 11849 / C 71).